The primary structure comprises 214 residues: Large ribosomal subunit protein uL3 (214 aa).

A disordered region spans residues 119–159 (GVKRHGFAGGPKTHGQSDRHRAPGSIGPTTDPGRVHKGKRM).

The protein belongs to the universal ribosomal protein uL3 family. In terms of assembly, part of the 50S ribosomal subunit. Forms a cluster with proteins L14 and L19.

Functionally, one of the primary rRNA binding proteins, it binds directly near the 3'-end of the 23S rRNA, where it nucleates assembly of the 50S subunit. In Thermomicrobium roseum (strain ATCC 27502 / DSM 5159 / P-2), this protein is Large ribosomal subunit protein uL3.